A 399-amino-acid polypeptide reads, in one-letter code: Phosphoglycerate kinase (399 aa).

Substrate-binding positions include 22 to 24 (DLN), arginine 37, 60 to 63 (HFGR), arginine 119, and arginine 152. Residues lysine 202, glutamate 324, and 354 to 357 (GGDT) each bind ATP.

Belongs to the phosphoglycerate kinase family. As to quaternary structure, monomer.

The protein resides in the cytoplasm. It catalyses the reaction (2R)-3-phosphoglycerate + ATP = (2R)-3-phospho-glyceroyl phosphate + ADP. Its pathway is carbohydrate degradation; glycolysis; pyruvate from D-glyceraldehyde 3-phosphate: step 2/5. This is Phosphoglycerate kinase from Rhizobium meliloti (strain 1021) (Ensifer meliloti).